The sequence spans 153 residues: Insulin-like growth factor 1 (153 aa).

The segment at 49–77 (GPETLCGAELVDALQFVCGDRGFYFNKPT) is b. 3 disulfides stabilise this stretch: Cys54–Cys96, Cys66–Cys109, and Cys95–Cys100. The tract at residues 78 to 89 (GYGSSSRRAPQT) is c. The tract at residues 90–110 (GIVDECCFRSCDLRRLEMYCA) is a. The interval 111-118 (PLKPAKSA) is d. A propeptide spans 119-153 (RSVRAQRHTDMPKAQKEVHLKNTSRGSSGNKNYRM) (e peptide). Positions 120–153 (SVRAQRHTDMPKAQKEVHLKNTSRGSSGNKNYRM) are disordered. The segment covering 125–138 (RHTDMPKAQKEVHL) has biased composition (basic and acidic residues). The span at 139-153 (KNTSRGSSGNKNYRM) shows a compositional bias: polar residues.

This sequence belongs to the insulin family. Forms a ternary complex with IGFR1 and ITGAV:ITGB3. Forms a ternary complex with IGFR1 and ITGA6:ITGB4. Forms a ternary complex with IGFBP3 and ALS.

It localises to the secreted. Functionally, the insulin-like growth factors, isolated from plasma, are structurally and functionally related to insulin but have a much higher growth-promoting activity. May be a physiological regulator of [1-14C]-2-deoxy-D-glucose (2DG) transport and glycogen synthesis in osteoblasts. Stimulates glucose transport in bone-derived osteoblastic (PyMS) cells and is effective at much lower concentrations than insulin, not only regarding glycogen and DNA synthesis but also with regard to enhancing glucose uptake. May play a role in synapse maturation. Ca(2+)-dependent exocytosis of IGF1 is required for sensory perception of smell in the olfactory bulb. Acts as a ligand for IGF1R. Binds to the alpha subunit of IGF1R, leading to the activation of the intrinsic tyrosine kinase activity which autophosphorylates tyrosine residues in the beta subunit thus initiating a cascade of down-stream signaling events leading to activation of the PI3K-AKT/PKB and the Ras-MAPK pathways. Binds to integrins ITGAV:ITGB3 and ITGA6:ITGB4. Its binding to integrins and subsequent ternary complex formation with integrins and IGFR1 are essential for IGF1 signaling. Induces the phosphorylation and activation of IGFR1, MAPK3/ERK1, MAPK1/ERK2 and AKT1. As part of the MAPK/ERK signaling pathway, acts as a negative regulator of apoptosis in cardiomyocytes via promotion of STUB1/CHIP-mediated ubiquitination and degradation of ICER-type isoforms of CREM. This is Insulin-like growth factor 1 from Sus scrofa (Pig).